A 353-amino-acid chain; its full sequence is Biotin synthase (353 aa).

The span at 1–22 (MTACSTTPTTSATSAQPAAGSP) shows a compositional bias: low complexity. A disordered region spans residues 1 to 30 (MTACSTTPTTSATSAQPAAGSPLQWHARPS). In terms of domain architecture, Radical SAM core spans 72-299 (GDIELATLLS…TARVRLSAGR (228 aa)). [4Fe-4S] cluster contacts are provided by cysteine 87, cysteine 91, and cysteine 94. Residues cysteine 131, cysteine 162, cysteine 222, and arginine 294 each coordinate [2Fe-2S] cluster.

The protein belongs to the radical SAM superfamily. Biotin synthase family. Homodimer. [4Fe-4S] cluster serves as cofactor. Requires [2Fe-2S] cluster as cofactor.

It catalyses the reaction (4R,5S)-dethiobiotin + (sulfur carrier)-SH + 2 reduced [2Fe-2S]-[ferredoxin] + 2 S-adenosyl-L-methionine = (sulfur carrier)-H + biotin + 2 5'-deoxyadenosine + 2 L-methionine + 2 oxidized [2Fe-2S]-[ferredoxin]. It participates in cofactor biosynthesis; biotin biosynthesis; biotin from 7,8-diaminononanoate: step 2/2. Catalyzes the conversion of dethiobiotin (DTB) to biotin by the insertion of a sulfur atom into dethiobiotin via a radical-based mechanism. The polypeptide is Biotin synthase (Delftia acidovorans (strain DSM 14801 / SPH-1)).